The primary structure comprises 296 residues: Acetylglutamate kinase (296 aa).

Substrate is bound by residues 65–66 (GG), arginine 87, and asparagine 190.

This sequence belongs to the acetylglutamate kinase family. ArgB subfamily.

It localises to the cytoplasm. It catalyses the reaction N-acetyl-L-glutamate + ATP = N-acetyl-L-glutamyl 5-phosphate + ADP. Its pathway is amino-acid biosynthesis; L-arginine biosynthesis; N(2)-acetyl-L-ornithine from L-glutamate: step 2/4. Its function is as follows. Catalyzes the ATP-dependent phosphorylation of N-acetyl-L-glutamate. In Moorella thermoacetica (strain ATCC 39073 / JCM 9320), this protein is Acetylglutamate kinase.